The following is a 486-amino-acid chain: Cardiolipin synthase A (486 aa).

Helical transmembrane passes span 3-23 (TFYTVVSWLVILGYWVLIAGV) and 38-58 (MAWLLIIYILPMVGIIAYLSV). PLD phosphodiesterase domains lie at 219–246 (MDLRQHRKMVMIDNYIAYTGSMNMVDPR) and 399–426 (EGGLLHTKSVLVDGELSLVGTVNLDMRS). Residues H224, K226, D231, H404, K406, and D411 contribute to the active site.

The protein belongs to the phospholipase D family. Cardiolipin synthase subfamily. ClsA sub-subfamily.

Its subcellular location is the cell inner membrane. The enzyme catalyses 2 a 1,2-diacyl-sn-glycero-3-phospho-(1'-sn-glycerol) = a cardiolipin + glycerol. Its function is as follows. Catalyzes the reversible phosphatidyl group transfer from one phosphatidylglycerol molecule to another to form cardiolipin (CL) (diphosphatidylglycerol) and glycerol. The sequence is that of Cardiolipin synthase A from Salmonella gallinarum (strain 287/91 / NCTC 13346).